Reading from the N-terminus, the 104-residue chain is Inclusion membrane protein F (104 aa).

2 helical membrane passes run 39 to 59 (LVVALAALVLNGALCVLSLVA) and 70 to 90 (LAVLVATTLASFLCAACVLFI).

The protein resides in the secreted. It is found in the host vacuole. It localises to the host pathogen-containing vacuole. The protein localises to the host pathogen-containing vacuole membrane. Functionally, inclusion membrane protein probably involved in early modification events of the chlamydial inclusion. This is Inclusion membrane protein F (incF) from Chlamydia trachomatis serovar D (strain ATCC VR-885 / DSM 19411 / UW-3/Cx).